A 532-amino-acid polypeptide reads, in one-letter code: MDSKKRSHSTGGEAENMESQESKAKRKPLQKHQFSKSNVVQKEEKDKTEGEEKGAEGLQEVVRQSRLRTAPSVLEFRFNKQRVRLISQDCHLQDQSQAFVYWMSRDQRVQDNWAFLYAQRLALKQKLPLHVCFCLAPCFLGATIRHYDFMLRGLEEVAEECEKLCIPFHLLLGLPKDVLPAFVQTHGIGGIVTDFSPLLHHTQWVKDVQDALPRQVPFVQVDAHNIVPCWVASDKQEYGARTIRHKIHDRLPHFLTEFPPVICHPYTSNVQAEPVDWNGCRAGLQVDRSVKEVSWAKPGTASGLTMLQSFIAERLPYFGSDRNNPNKDALSNLSPWFHFGQVSVQRAILEVQKHRSRYPDSVTNFVEEAVVRRELADNFCFYNKNYDKLEGAYDWAQTTLRLHAKDKRPHLYSLEQLESGKTHDPLWNAAQMQTVKEGKMHGFLRMYWAKKILEWTRSPEEALEFAIYLNDRFQLDGWDPNGYVGCMWSICGIHDQGWAEREIFGKIRYMNYAGCKRKFDVAEFERKISPAD.

Residues 1-57 (MDSKKRSHSTGGEAENMESQESKAKRKPLQKHQFSKSNVVQKEEKDKTEGEEKGAEG) form a disordered region. The segment covering 24 to 34 (AKRKPLQKHQF) has biased composition (basic residues). Residues 41-55 (QKEEKDKTEGEEKGA) show a composition bias toward basic and acidic residues. In terms of domain architecture, Photolyase/cryptochrome alpha/beta spans 97 to 229 (QAFVYWMSRD…QVDAHNIVPC (133 aa)). Residue Arg-322 coordinates DNA. Interaction with DNA stretches follow at residues 368 to 376 (EAVVRRELA) and 442 to 443 (GF). An FAD-binding site is contributed by 468–470 (YLN).

It belongs to the DNA photolyase class-2 family. It depends on FAD as a cofactor.

It catalyses the reaction cyclobutadipyrimidine (in DNA) = 2 pyrimidine residues (in DNA).. In terms of biological role, involved in repair of UV radiation-induced DNA damage. Catalyzes the light-dependent monomerization (300-600 nm) of cyclobutyl pyrimidine dimers (in cis-syn configuration), which are formed between adjacent bases on the same DNA strand upon exposure to ultraviolet radiation. This chain is Deoxyribodipyrimidine photo-lyase (PHR), found in Potorous tridactylus (Potoroo).